Consider the following 433-residue polypeptide: Glutamate-1-semialdehyde 2,1-aminomutase (433 aa).

Position 271 is an N6-(pyridoxal phosphate)lysine (Lys-271).

The protein belongs to the class-III pyridoxal-phosphate-dependent aminotransferase family. HemL subfamily. Homodimer. It depends on pyridoxal 5'-phosphate as a cofactor.

Its subcellular location is the cytoplasm. It carries out the reaction (S)-4-amino-5-oxopentanoate = 5-aminolevulinate. The protein operates within porphyrin-containing compound metabolism; protoporphyrin-IX biosynthesis; 5-aminolevulinate from L-glutamyl-tRNA(Glu): step 2/2. Its pathway is porphyrin-containing compound metabolism; chlorophyll biosynthesis. The sequence is that of Glutamate-1-semialdehyde 2,1-aminomutase from Prochlorococcus marinus (strain MIT 9215).